The chain runs to 1291 residues: MATNNTQNLRKSFAKTRSTVEYPDFLDIQVRSFKDFFQIDTPAENRFKEGLYKVFAENFPISDSRDNFILDFIDYNIDTPKYNVDECIDRGLTYAVPLKAKLRLTCNDKDNEDFQTIEQEVFLGNIPYMTERGSFVINGAERVIVSQLHRSPGVFFAQSKHTNGTKLYSARVIPFKGSWIEFATDVNNVMFAYIDRKKKFPVTTLLRAIGYGSDKDILDLFGLSEEVEATKANIKKAIGRKLAARVLRTWTEDFVDEDTGEVVSIDRNEVLLERDSIIKEEDINIIVESGSKSIILHREDVNIADYTIIYNTLQKDNSNSEKEAVEQIYRQLRNTDAPDEQTARDIIHNLFFSDKRYDLGEVGRYRINKKLGSGMGSEVKVLTKEDIINIVKYLIGLINSRAVVDDIDHLSNRRVRTMGEQLYSQFSVGLARMARTIKERMNVRDNEDFKPVDLINARTLSSVINSFFGTNQLSQFMDQTNPLAEITHKRRMSALGPGGLSRERAGFEVRDVHYTHYGRLCTIETPEGPNIGLISSLCVHAKVNSMGFIETPYRKVIDGIVDVKNQPVFLTAEEEDGAHIAQANAMYDDNGNFISDRIKARYEGDFPVIAPDKVDLIDIATNQIVSVAASLIPFLEHDDANRALMGSNMQRQAVPLLRPEAPIVGTGLERRVAMDSRTLLIAEADGVVEFVDANEIKMRYDLTDEDRLVSFDSDIITYSLIKFRRTNQDTCINLKPVIQHGERVKKGQVLCEGYATDKGELALGRNLMVAFMPWQGYNFEDAIVISEKVVRDDIFTSIHIEEFELEVRDTKRGEEELTSEIPNVSEEAVKNLDENGIIRTGAEIKEGDILIGKITPKGESDPTPEEKLLRAIFGDKAGDVKDASMKAPPSLRGVVIDTKLFSRPKKDKDLRIKSKKQVETIKGKYSKDLLALREQMIEKLAALLDGQTSQGVKHKFGDEVISKGVKFSRKNIEANVFPDKNPYRDESNYNVQEEANLLGDLIIDNWTSDKKINENVLRLVKNYLTKRNETAGKFKRERFTLEVGDELPAGIVQLAKVYIAKKRKLKVGDKMAGRHGNKGVVARIVRDEDMPFLEDGTPVDIVLNPLGVPSRMNIGQIYETLLGLAGKKLGRKYATPIFDGASEEEVINELRDAGLPTIGRTKLVDGLSGNPFDQPVTVGVIYMMKLGHLVDDKMHARSIGPYSLITQQPLGGKAQFGGQRFGEMEVWALEAFGAANILQEILTVKSDDVVGRAKTYECIVKGENLPRPNIPESFNVLVHELRGLALEITLH.

This sequence belongs to the RNA polymerase beta chain family. The RNAP catalytic core consists of 2 alpha, 1 beta, 1 beta' and 1 omega subunit. When a sigma factor is associated with the core the holoenzyme is formed, which can initiate transcription.

The catalysed reaction is RNA(n) + a ribonucleoside 5'-triphosphate = RNA(n+1) + diphosphate. In terms of biological role, DNA-dependent RNA polymerase catalyzes the transcription of DNA into RNA using the four ribonucleoside triphosphates as substrates. The chain is DNA-directed RNA polymerase subunit beta from Cytophaga hutchinsonii (strain ATCC 33406 / DSM 1761 / CIP 103989 / NBRC 15051 / NCIMB 9469 / D465).